We begin with the raw amino-acid sequence, 141 residues long: HTH-type transcriptional repressor NsrR (141 aa).

The HTH rrf2-type domain maps to 2 to 129 (QLTSFTDYGL…DNYTLADLVE (128 aa)). Positions 28–51 (ISEVTDVYGVSRNHMVKIINQLSR) form a DNA-binding region, H-T-H motif. The [2Fe-2S] cluster site is built by Cys-91, Cys-96, and Cys-102.

[2Fe-2S] cluster serves as cofactor.

Nitric oxide-sensitive repressor of genes involved in protecting the cell against nitrosative stress. May require iron for activity. This Escherichia coli O157:H7 (strain EC4115 / EHEC) protein is HTH-type transcriptional repressor NsrR.